An 881-amino-acid chain; its full sequence is DNA mismatch repair protein MutS (881 aa).

632–639 lines the ATP pocket; that stretch reads GPNMGGKS.

This sequence belongs to the DNA mismatch repair MutS family.

Functionally, this protein is involved in the repair of mismatches in DNA. It is possible that it carries out the mismatch recognition step. This protein has a weak ATPase activity. The protein is DNA mismatch repair protein MutS of Chelativorans sp. (strain BNC1).